A 526-amino-acid chain; its full sequence is Protein DETOXIFICATION 43 (526 aa).

Over Met1–Glu36 the chain is Cytoplasmic. Residues Ile37–Ile57 traverse the membrane as a helical segment. Over Asp58–Thr59 the chain is Extracellular. Residues Ala60–Phe80 traverse the membrane as a helical segment. Residues Asn81–Thr170 are Cytoplasmic-facing. Positions Ile133–Arg166 are disordered. Residues Ser134 to Pro144 are compositionally biased toward polar residues. Residues Ala171–Phe191 traverse the membrane as a helical segment. Topologically, residues Ser192–Tyr215 are extracellular. Residues Leu216–Phe236 form a helical membrane-spanning segment. Residues Arg237–Thr244 are Cytoplasmic-facing. Residues Pro245–Leu267 traverse the membrane as a helical segment. The Extracellular portion of the chain corresponds to Arg268–Gly270. Residues Ile271–Leu293 form a helical membrane-spanning segment. Over Ala294–Gly316 the chain is Cytoplasmic. The helical transmembrane segment at Leu317–Ala337 threads the bilayer. At Ala338–Gln353 the chain is on the extracellular side. The chain crosses the membrane as a helical span at residues Val354 to Ala374. At Cys375–Gly396 the chain is on the cytoplasmic side. The helical transmembrane segment at Phe397–Val417 threads the bilayer. The Extracellular segment spans residues Phe418–His426. A helical membrane pass occupies residues Leu427–Val447. At Leu448 to Asp457 the chain is on the cytoplasmic side. The helical transmembrane segment at Phe458–Tyr478 threads the bilayer. Residues Met479–Gly484 lie on the Extracellular side of the membrane. A helical membrane pass occupies residues Phe485–Ala505. The Cytoplasmic portion of the chain corresponds to Arg506–Ser526.

Belongs to the multi antimicrobial extrusion (MATE) (TC 2.A.66.1) family. In terms of tissue distribution, expressed in roots in the pericycle and cells internal to the pericycle and surrounding the vascular tissue. Also expressed in seed and flower.

Its subcellular location is the cell membrane. Citrate transporter responsible for loading citrate into xylem tissues, which helps facilitate iron transport to shoots. Mediates the citrate release in the apoplastic spaces during plant development allowing iron nutrition between symplastically disconnected tissues. In Arabidopsis thaliana (Mouse-ear cress), this protein is Protein DETOXIFICATION 43.